The primary structure comprises 217 residues: Uracil-DNA glycosylase (217 aa).

Catalysis depends on Asp62, which acts as the Proton acceptor.

Belongs to the uracil-DNA glycosylase (UDG) superfamily. UNG family.

Its subcellular location is the cytoplasm. The enzyme catalyses Hydrolyzes single-stranded DNA or mismatched double-stranded DNA and polynucleotides, releasing free uracil.. Functionally, excises uracil residues from the DNA which can arise as a result of misincorporation of dUMP residues by DNA polymerase or due to deamination of cytosine. This chain is Uracil-DNA glycosylase, found in Streptococcus pyogenes serotype M18 (strain MGAS8232).